We begin with the raw amino-acid sequence, 291 residues long: Elongation factor Ts (291 aa).

The interval 79-82 (TDFV) is involved in Mg(2+) ion dislocation from EF-Tu.

It belongs to the EF-Ts family.

Its subcellular location is the cytoplasm. Its function is as follows. Associates with the EF-Tu.GDP complex and induces the exchange of GDP to GTP. It remains bound to the aminoacyl-tRNA.EF-Tu.GTP complex up to the GTP hydrolysis stage on the ribosome. The chain is Elongation factor Ts from Ruegeria pomeroyi (strain ATCC 700808 / DSM 15171 / DSS-3) (Silicibacter pomeroyi).